The primary structure comprises 325 residues: Cytochrome c1, heme protein, mitochondrial (325 aa).

The N-terminal 84 residues, 1 to 84, are a transit peptide targeting the mitochondrion; that stretch reads MAAAAASLRG…AMALHSAVSA (84 aa). Residues 85–281 are Mitochondrial intermembrane-facing; it reads SDLELHPPSY…TFLRWASEPE (197 aa). One can recognise a Cytochrome c domain in the interval 108–209; sequence TSIRRGFQVY…IVRARHGGED (102 aa). Residues C121, C124, and H125 each contribute to the heme c site. Phosphoserine is present on S182. M244 is a heme c binding site. The helical transmembrane segment at 282–315 threads the bilayer; it reads HDHRKRMGLKMLMMMALLVPLVYTIKRHKWSVLK. Residues 316–325 lie on the Mitochondrial matrix side of the membrane; that stretch reads SRKLAYRPPK.

It belongs to the cytochrome c family. Component of the ubiquinol-cytochrome c oxidoreductase (cytochrome b-c1 complex, complex III, CIII), a multisubunit enzyme composed of 11 subunits. The complex is composed of 3 respiratory subunits cytochrome b, cytochrome c1 and Rieske protein UQCRFS1, 2 core protein subunits UQCRC1/QCR1 and UQCRC2/QCR2, and 6 low-molecular weight protein subunits UQCRH/QCR6, UQCRB/QCR7, UQCRQ/QCR8, UQCR10/QCR9, UQCR11/QCR10 and subunit 9, the cleavage product of Rieske protein UQCRFS1. The complex exists as an obligatory dimer and forms supercomplexes (SCs) in the inner mitochondrial membrane with NADH-ubiquinone oxidoreductase (complex I, CI) and cytochrome c oxidase (complex IV, CIV), resulting in different assemblies (supercomplex SCI(1)III(2)IV(1) and megacomplex MCI(2)III(2)IV(2)). Interacts with FLVCR2; this interaction occurs in the absence of heme and is disrupted upon heme binding. It depends on heme c as a cofactor.

Its subcellular location is the mitochondrion inner membrane. It catalyses the reaction a quinol + 2 Fe(III)-[cytochrome c](out) = a quinone + 2 Fe(II)-[cytochrome c](out) + 2 H(+)(out). Component of the ubiquinol-cytochrome c oxidoreductase, a multisubunit transmembrane complex that is part of the mitochondrial electron transport chain which drives oxidative phosphorylation. The respiratory chain contains 3 multisubunit complexes succinate dehydrogenase (complex II, CII), ubiquinol-cytochrome c oxidoreductase (cytochrome b-c1 complex, complex III, CIII) and cytochrome c oxidase (complex IV, CIV), that cooperate to transfer electrons derived from NADH and succinate to molecular oxygen, creating an electrochemical gradient over the inner membrane that drives transmembrane transport and the ATP synthase. The cytochrome b-c1 complex catalyzes electron transfer from ubiquinol to cytochrome c, linking this redox reaction to translocation of protons across the mitochondrial inner membrane, with protons being carried across the membrane as hydrogens on the quinol. In the process called Q cycle, 2 protons are consumed from the matrix, 4 protons are released into the intermembrane space and 2 electrons are passed to cytochrome c. Cytochrome c1 is a catalytic core subunit containing a c-type heme. It transfers electrons from the [2Fe-2S] iron-sulfur cluster of the Rieske protein to cytochrome c. This chain is Cytochrome c1, heme protein, mitochondrial (CYC1), found in Homo sapiens (Human).